We begin with the raw amino-acid sequence, 287 residues long: Lectin 10 (287 aa).

At 1 to 11 (MALSNLKSNRT) the chain is on the cytoplasmic side. The helical transmembrane segment at 12–31 (LSSSLITIFIISLFLQYHNI) threads the bilayer. Residues 32 to 287 (KSQSSWQSRQ…IINWSFESAL (256 aa)) lie on the Extracellular side of the membrane. Residues N124, N147, N243, and N280 are each glycosylated (N-linked (GlcNAc...) asparagine).

Belongs to the leguminous lectin family.

It is found in the membrane. May be involved in arbuscular mycorrhizal (AM) symbiosis with AM fungi. The protein is Lectin 10 of Medicago truncatula (Barrel medic).